A 216-amino-acid polypeptide reads, in one-letter code: Oligoribonuclease (216 aa).

The Exonuclease domain maps to 6–171 (VVWMDCEMTG…ADIKESIREL (166 aa)). The active site involves tyrosine 128.

The protein belongs to the oligoribonuclease family.

The protein resides in the cytoplasm. In terms of biological role, 3'-to-5' exoribonuclease specific for small oligoribonucleotides. The protein is Oligoribonuclease of Nocardia farcinica (strain IFM 10152).